The following is a 260-amino-acid chain: Acetyl-coenzyme A carboxylase carboxyl transferase subunit alpha (260 aa).

A CoA carboxyltransferase C-terminal domain is found at 1 to 235 (MSAYDKVMAA…SNKILHSINK (235 aa)).

It belongs to the AccA family. In terms of assembly, acetyl-CoA carboxylase is a heterohexamer composed of biotin carboxyl carrier protein (AccB), biotin carboxylase (AccC) and two subunits each of ACCase subunit alpha (AccA) and ACCase subunit beta (AccD).

The protein resides in the cytoplasm. The catalysed reaction is N(6)-carboxybiotinyl-L-lysyl-[protein] + acetyl-CoA = N(6)-biotinyl-L-lysyl-[protein] + malonyl-CoA. It functions in the pathway lipid metabolism; malonyl-CoA biosynthesis; malonyl-CoA from acetyl-CoA: step 1/1. Its function is as follows. Component of the acetyl coenzyme A carboxylase (ACC) complex. First, biotin carboxylase catalyzes the carboxylation of biotin on its carrier protein (BCCP) and then the CO(2) group is transferred by the carboxyltransferase to acetyl-CoA to form malonyl-CoA. This chain is Acetyl-coenzyme A carboxylase carboxyl transferase subunit alpha, found in Ruminiclostridium cellulolyticum (strain ATCC 35319 / DSM 5812 / JCM 6584 / H10) (Clostridium cellulolyticum).